A 217-amino-acid chain; its full sequence is Large ribosomal subunit protein uL4 (217 aa).

The segment at 58–90 (TAATKGRSDVSGGGKKPWRQKGTGRARSGTSRS) is disordered.

This sequence belongs to the universal ribosomal protein uL4 family. As to quaternary structure, part of the 50S ribosomal subunit.

One of the primary rRNA binding proteins, this protein initially binds near the 5'-end of the 23S rRNA. It is important during the early stages of 50S assembly. It makes multiple contacts with different domains of the 23S rRNA in the assembled 50S subunit and ribosome. In terms of biological role, forms part of the polypeptide exit tunnel. The polypeptide is Large ribosomal subunit protein uL4 (Syntrophus aciditrophicus (strain SB)).